The following is a 402-amino-acid chain: UPF0597 protein THA_1286 (402 aa).

It belongs to the UPF0597 family.

This is UPF0597 protein THA_1286 from Thermosipho africanus (strain TCF52B).